The following is a 651-amino-acid chain: DNA mismatch repair protein MutL (651 aa).

The segment at 383 to 405 is disordered; sequence TAAEEPTPAPTSPDLEIGDLDDQ.

This sequence belongs to the DNA mismatch repair MutL/HexB family.

Functionally, this protein is involved in the repair of mismatches in DNA. It is required for dam-dependent methyl-directed DNA mismatch repair. May act as a 'molecular matchmaker', a protein that promotes the formation of a stable complex between two or more DNA-binding proteins in an ATP-dependent manner without itself being part of a final effector complex. This Lacticaseibacillus paracasei (strain ATCC 334 / BCRC 17002 / CCUG 31169 / CIP 107868 / KCTC 3260 / NRRL B-441) (Lactobacillus paracasei) protein is DNA mismatch repair protein MutL.